The primary structure comprises 103 residues: Putative protein YmfH (103 aa).

The segment at 1 to 34 (MVNAAQRTRVKVEADNRPSVDTHPPGVQPSPGTG) is disordered. The segment covering 10–20 (VKVEADNRPSV) has biased composition (basic and acidic residues). The next 2 helical transmembrane spans lie at 42–62 (MLCVVLAVPVFSLVLSGTALF) and 73–93 (GLITRPILIAVATGALLCFVE).

It localises to the cell inner membrane. The polypeptide is Putative protein YmfH (ymfH) (Escherichia coli (strain K12)).